The primary structure comprises 938 residues: Isoleucine--tRNA ligase (938 aa).

The short motif at 58 to 68 is the 'HIGH' region element; that stretch reads PYANGNIHIGH. Glutamate 562 provides a ligand contact to L-isoleucyl-5'-AMP. The 'KMSKS' region motif lies at 603-607; the sequence is KMSKS. Lysine 606 provides a ligand contact to ATP. Positions 901, 904, 921, and 924 each coordinate Zn(2+).

Belongs to the class-I aminoacyl-tRNA synthetase family. IleS type 1 subfamily. In terms of assembly, monomer. Zn(2+) serves as cofactor.

It is found in the cytoplasm. It carries out the reaction tRNA(Ile) + L-isoleucine + ATP = L-isoleucyl-tRNA(Ile) + AMP + diphosphate. Catalyzes the attachment of isoleucine to tRNA(Ile). As IleRS can inadvertently accommodate and process structurally similar amino acids such as valine, to avoid such errors it has two additional distinct tRNA(Ile)-dependent editing activities. One activity is designated as 'pretransfer' editing and involves the hydrolysis of activated Val-AMP. The other activity is designated 'posttransfer' editing and involves deacylation of mischarged Val-tRNA(Ile). The chain is Isoleucine--tRNA ligase from Actinobacillus pleuropneumoniae serotype 5b (strain L20).